Reading from the N-terminus, the 273-residue chain is MKNIQIIVASDSVGETAELVARACISQFNPKQCESEISRYPYIEALENVDEVISVAKDTEAIVVYTLVKPEIRKYMEAKLAEFKIKAVDIMGPLMNILLDQIDEKPYFEPGLVHQLDEAYFKKIDAIEFAVKYDDGKDPKGLFKADIVLLGISRTSKTPLSQYLAHKSYKVMNIPIVPEVTPPDDLFNIDSSKCIALKISEEKLNRIRKERLRQLGLGESARYATEQRIEEELNYFHELVDKIGCPIIDVSDKAIEETANDIISLIEQNNFKN.

151–158 (GISRTSKT) is a binding site for ADP.

The protein belongs to the pyruvate, phosphate/water dikinase regulatory protein family. PDRP subfamily.

It carries out the reaction N(tele)-phospho-L-histidyl/L-threonyl-[pyruvate, phosphate dikinase] + ADP = N(tele)-phospho-L-histidyl/O-phospho-L-threonyl-[pyruvate, phosphate dikinase] + AMP + H(+). It catalyses the reaction N(tele)-phospho-L-histidyl/O-phospho-L-threonyl-[pyruvate, phosphate dikinase] + phosphate + H(+) = N(tele)-phospho-L-histidyl/L-threonyl-[pyruvate, phosphate dikinase] + diphosphate. Functionally, bifunctional serine/threonine kinase and phosphorylase involved in the regulation of the pyruvate, phosphate dikinase (PPDK) by catalyzing its phosphorylation/dephosphorylation. This chain is Putative pyruvate, phosphate dikinase regulatory protein 2, found in Staphylococcus saprophyticus subsp. saprophyticus (strain ATCC 15305 / DSM 20229 / NCIMB 8711 / NCTC 7292 / S-41).